The primary structure comprises 412 residues: MSDKLILPSWLSRGIEEYFPIKGIDQTFSEIIDDAKKNNKKLRVKLGIDPTGTDIHLGHSILFKKLRAFQDNGHIAVLIIGDFTAQIGDPTGKNKTRVQLSEKQVKDNAKTYLTQLGMGKPANESILDFDSKDKIEIRYNSEWLKGLNLNSIIELMGSATVSQMLAKEEFNKRYNSQVPIALHEFLYPLLQGYDSVVVQSDIELGGTDQKFNIAIGRDLQRHFKQEPQFGVLLPILTGLDGIKKMSKSEFNTVGLTEDSLSMYSKLEKVPDNIIPTYFELLTELDLSVLNDANPRELQRRMALEVTTLFHGAEEASKAQSNCEKLFLGHKEKVGEIPEISLKDIVFPVKFFYLLSSLKLFKSSSESKRSIKGGGVKIDSQKVINPDIVFDSKKDLEGKILQIGKKIIKRFEN.

A 'HIGH' region motif is present at residues proline 50–histidine 59. Positions lysine 244–serine 248 match the 'KMSKS' region motif. ATP is bound at residue lysine 247. One can recognise an S4 RNA-binding domain in the interval valine 348–glutamate 411.

This sequence belongs to the class-I aminoacyl-tRNA synthetase family. TyrS type 2 subfamily. As to quaternary structure, homodimer.

The protein localises to the cytoplasm. It catalyses the reaction tRNA(Tyr) + L-tyrosine + ATP = L-tyrosyl-tRNA(Tyr) + AMP + diphosphate + H(+). Catalyzes the attachment of tyrosine to tRNA(Tyr) in a two-step reaction: tyrosine is first activated by ATP to form Tyr-AMP and then transferred to the acceptor end of tRNA(Tyr). This is Tyrosine--tRNA ligase from Prochlorococcus marinus (strain MIT 9312).